The primary structure comprises 630 residues: SHC-transforming protein 4 (630 aa).

The CH2 stretch occupies residues 1-185; the sequence is MRERGQDSLA…RQDRHFLQHL (185 aa). Disordered regions lie at residues 39-80 and 118-150; these read TSLD…QESP and KLQE…QQDL. Positions 125–142 are enriched in low complexity; the sequence is PGSSGPSSPETSLSRSGT. One can recognise a PID domain in the interval 186-369; sequence LGMGMNYCVR…VHIDSHAEER (184 aa). The interval 370–525 is CH1; sequence EDHEYYNEIP…HIKQQLWSEE (156 aa). The residue at position 424 (Y424) is a Phosphotyrosine. Polar residues-rich tracts occupy residues 471-486 and 502-513; these read LQST…SAQP and PGATAQPASSHS. The tract at residues 471–514 is disordered; it reads LQSTPGSAGNQRSAQPLGSPWHCGKAPETVQPGATAQPASSHSL. One can recognise an SH2 domain in the interval 526–617; it reads CYHGKLSRKA…GSEVSLKQPV (92 aa).

Interacts (via PID domain) with phosphorylated MUSK (via NPXY motif); undergoes tyrosine phosphorylation downstream of activated MUSK. Interacts with GRB2; the interaction is dependent of Tyr-424 phosphorylation and increased by EGF. In terms of processing, phosphorylated; the phosphorylation is enhanced by EGF. Phosphorylation at Tyr-424 is required for the interaction with GRB2. As to expression, only expressed in melanomas. Weakly expressed in normal melanocytes and benign nevi. Highly expressed at the transition from radial growth phase to vertical growth phase and metastatic melanomas, when tumor cells acquire migratory competence and invasive potential.

The protein localises to the postsynaptic cell membrane. Activates both Ras-dependent and Ras-independent migratory pathways in melanomas. Contributes to the early phases of agrin-induced tyrosine phosphorylation of CHRNB1. This is SHC-transforming protein 4 (SHC4) from Homo sapiens (Human).